Consider the following 273-residue polypeptide: Ribosomal RNA small subunit methyltransferase A (273 aa).

S-adenosyl-L-methionine contacts are provided by N18, L20, G45, E66, D91, and N113.

The protein belongs to the class I-like SAM-binding methyltransferase superfamily. rRNA adenine N(6)-methyltransferase family. RsmA subfamily.

The protein resides in the cytoplasm. It catalyses the reaction adenosine(1518)/adenosine(1519) in 16S rRNA + 4 S-adenosyl-L-methionine = N(6)-dimethyladenosine(1518)/N(6)-dimethyladenosine(1519) in 16S rRNA + 4 S-adenosyl-L-homocysteine + 4 H(+). Functionally, specifically dimethylates two adjacent adenosines (A1518 and A1519) in the loop of a conserved hairpin near the 3'-end of 16S rRNA in the 30S particle. May play a critical role in biogenesis of 30S subunits. The protein is Ribosomal RNA small subunit methyltransferase A of Salmonella agona (strain SL483).